Here is a 429-residue protein sequence, read N- to C-terminus: uncharacterized protein (429 aa).

Basic and acidic residues predominate over residues 1–12; it reads MSDSKEDIRNGQ. 3 disordered regions span residues 1-63, 257-306, and 320-429; these read MSDS…APEA, RSRA…SDRM, and YRGY…SDSE. Positions 328–362 are enriched in acidic residues; the sequence is EENEEDDLGDFIAEEEEEEEQEEEQEEDEEDEEEV. Residues 369–378 show a composition bias toward basic and acidic residues; the sequence is KGFDADKEAS.

It belongs to the LEO1 family.

The protein localises to the nucleus. This is an uncharacterized protein from Schizosaccharomyces pombe (strain 972 / ATCC 24843) (Fission yeast).